Here is a 289-residue protein sequence, read N- to C-terminus: 3-methyl-2-oxobutanoate hydroxymethyltransferase (289 aa).

Polar residues predominate over residues 1–15; that stretch reads MSTTFQLDTSTSRAN. Residues 1-20 are disordered; that stretch reads MSTTFQLDTSTSRANPTPAP. Mg(2+) is bound by residues D67 and D106. 3-methyl-2-oxobutanoate contacts are provided by residues 67 to 68, D106, and K136; that span reads DS. E138 is a Mg(2+) binding site. Catalysis depends on E205, which acts as the Proton acceptor.

It belongs to the PanB family. Homodecamer; pentamer of dimers. Mg(2+) is required as a cofactor.

It is found in the cytoplasm. It catalyses the reaction 3-methyl-2-oxobutanoate + (6R)-5,10-methylene-5,6,7,8-tetrahydrofolate + H2O = 2-dehydropantoate + (6S)-5,6,7,8-tetrahydrofolate. The protein operates within cofactor biosynthesis; (R)-pantothenate biosynthesis; (R)-pantoate from 3-methyl-2-oxobutanoate: step 1/2. Catalyzes the reversible reaction in which hydroxymethyl group from 5,10-methylenetetrahydrofolate is transferred onto alpha-ketoisovalerate to form ketopantoate. In Novosphingobium aromaticivorans (strain ATCC 700278 / DSM 12444 / CCUG 56034 / CIP 105152 / NBRC 16084 / F199), this protein is 3-methyl-2-oxobutanoate hydroxymethyltransferase.